A 608-amino-acid chain; its full sequence is RAS guanyl-releasing protein 2 (608 aa).

One can recognise an N-terminal Ras-GEF domain in the interval 4–126 (TLDLDKGCTV…SLIDIENVPT (123 aa)). Phosphoserine occurs at positions 116, 117, and 147. In terms of domain architecture, Ras-GEF spans 154 to 387 (EPLELAAHLT…YQLSLQREPR (234 aa)). The tract at residues 382-407 (LQREPRSKSSPTSPTTCTPPPRPPVL) is disordered. EF-hand domains are found at residues 426–461 (HIEKMVESVFRNFDVDGDGHISQEEFQIIRGNFPYL) and 463–490 (AFGDLDQNQDGCISKEEMVSYFLRSSSM). Positions 439, 441, 443, 445, 450, 468, 470, 472, 474, and 479 each coordinate Ca(2+). The Phorbol-ester/DAG-type zinc-finger motif lies at 498–548 (VHNFHESNSLRPVACRHCKALILGIYKQGLKCRACGVNCHKQCKDRLSVEC). Phosphoserine is present on residues serine 554 and serine 575. Residues 556-591 (SLEGSAPSPSPTHTHHRAFSFSLPRPGRRGSRPPEI) form a disordered region.

Belongs to the RASGRP family. Forms a signaling complex with RAP1 and BRAF. Interacts with RAP1. Interacts with F-actin.

Its subcellular location is the cytoplasm. It localises to the cytosol. The protein resides in the cell membrane. It is found in the synapse. The protein localises to the synaptosome. Its subcellular location is the cell projection. It localises to the ruffle membrane. In terms of biological role, functions as a calcium- and DAG-regulated nucleotide exchange factor specifically activating Rap through the exchange of bound GDP for GTP. May also activate other GTPases such as RRAS, RRAS2, NRAS, KRAS but not HRAS. Functions in aggregation of platelets and adhesion of T-lymphocytes and neutrophils probably through inside-out integrin activation. May function in the muscarinic acetylcholine receptor M1/CHRM1 signaling pathway. The sequence is that of RAS guanyl-releasing protein 2 (RASGRP2) from Bos taurus (Bovine).